Consider the following 174-residue polypeptide: NADPH-dependent 7-cyano-7-deazaguanine reductase (174 aa).

C72 functions as the Thioimide intermediate in the catalytic mechanism. D79 serves as the catalytic Proton donor. Substrate contacts are provided by residues 94–96 and 113–114; these read VES and HE.

It belongs to the GTP cyclohydrolase I family. QueF type 1 subfamily.

The protein resides in the cytoplasm. The enzyme catalyses 7-aminomethyl-7-carbaguanine + 2 NADP(+) = 7-cyano-7-deazaguanine + 2 NADPH + 3 H(+). The protein operates within tRNA modification; tRNA-queuosine biosynthesis. In terms of biological role, catalyzes the NADPH-dependent reduction of 7-cyano-7-deazaguanine (preQ0) to 7-aminomethyl-7-deazaguanine (preQ1). The sequence is that of NADPH-dependent 7-cyano-7-deazaguanine reductase from Synechococcus elongatus (strain ATCC 33912 / PCC 7942 / FACHB-805) (Anacystis nidulans R2).